Reading from the N-terminus, the 1141-residue chain is Isoleucine--tRNA ligase (1141 aa).

A 'HIGH' region motif is present at residues Pro-50–His-60. Positions Lys-689–Arg-693 match the 'KMSKS' region motif. Lys-692 provides a ligand contact to ATP.

This sequence belongs to the class-I aminoacyl-tRNA synthetase family. IleS type 2 subfamily. In terms of assembly, monomer. It depends on Zn(2+) as a cofactor.

The protein localises to the cytoplasm. It catalyses the reaction tRNA(Ile) + L-isoleucine + ATP = L-isoleucyl-tRNA(Ile) + AMP + diphosphate. Its function is as follows. Catalyzes the attachment of isoleucine to tRNA(Ile). As IleRS can inadvertently accommodate and process structurally similar amino acids such as valine, to avoid such errors it has two additional distinct tRNA(Ile)-dependent editing activities. One activity is designated as 'pretransfer' editing and involves the hydrolysis of activated Val-AMP. The other activity is designated 'posttransfer' editing and involves deacylation of mischarged Val-tRNA(Ile). The sequence is that of Isoleucine--tRNA ligase from Bacteroides fragilis (strain YCH46).